We begin with the raw amino-acid sequence, 431 residues long: tRNA-2-methylthio-N(6)-dimethylallyladenosine synthase (431 aa).

The region spanning 4–120 (RAVYIKTFGC…IENIIENQVS (117 aa)) is the MTTase N-terminal domain. Positions 13, 49, 83, 154, 158, and 161 each coordinate [4Fe-4S] cluster. Residues 140-367 (RKDCVKAWVN…LKLQDEITER (228 aa)) enclose the Radical SAM core domain. Positions 370-430 (KRLEGKIQEV…RHSLEGDIIS (61 aa)) constitute a TRAM domain.

It belongs to the methylthiotransferase family. MiaB subfamily. Monomer. [4Fe-4S] cluster is required as a cofactor.

Its subcellular location is the cytoplasm. The catalysed reaction is N(6)-dimethylallyladenosine(37) in tRNA + (sulfur carrier)-SH + AH2 + 2 S-adenosyl-L-methionine = 2-methylsulfanyl-N(6)-dimethylallyladenosine(37) in tRNA + (sulfur carrier)-H + 5'-deoxyadenosine + L-methionine + A + S-adenosyl-L-homocysteine + 2 H(+). In terms of biological role, catalyzes the methylthiolation of N6-(dimethylallyl)adenosine (i(6)A), leading to the formation of 2-methylthio-N6-(dimethylallyl)adenosine (ms(2)i(6)A) at position 37 in tRNAs that read codons beginning with uridine. This is tRNA-2-methylthio-N(6)-dimethylallyladenosine synthase from Thermodesulfovibrio yellowstonii (strain ATCC 51303 / DSM 11347 / YP87).